A 106-amino-acid chain; its full sequence is ER membrane protein complex subunit 5 (106 aa).

Residues 1–12 (MESSTINAKKIS) lie on the Cytoplasmic side of the membrane. The chain crosses the membrane as a helical span at residues 13–33 (VLLTLFSIIGYTAYSAHESIL). Over 34–46 (EIRQDGKLPLDIK) the chain is Lumenal. Residues 47 to 67 (CEVILVTLLFTFTTVIIASPL) traverse the membrane as a helical segment. Over 68-106 (RSIQLNKWSHQRSDLAFLNSRTNFLRIKELKEKIEKVKN) the chain is Cytoplasmic.

The protein belongs to the membrane magnesium transporter (TC 1.A.67) family. As to quaternary structure, component of the ER membrane protein complex (EMC).

Its subcellular location is the endoplasmic reticulum membrane. Functionally, the EMC seems to be required for efficient folding of proteins in the endoplasmic reticulum (ER). The protein is ER membrane protein complex subunit 5 (emc5) of Schizosaccharomyces pombe (strain 972 / ATCC 24843) (Fission yeast).